Consider the following 126-residue polypeptide: Large ribosomal subunit protein bL20 (126 aa).

It belongs to the bacterial ribosomal protein bL20 family.

Binds directly to 23S ribosomal RNA and is necessary for the in vitro assembly process of the 50S ribosomal subunit. It is not involved in the protein synthesizing functions of that subunit. This is Large ribosomal subunit protein bL20 from Acholeplasma laidlawii (strain PG-8A).